Here is a 440-residue protein sequence, read N- to C-terminus: MLITNPALLGILASLVPLALGAPNQPIQARSRKCVIPSSYASSHGTADDSPAVASAFAQCAENSVIVFQEGVDYNIFHPIKATNLSNVEIRVLGNLHLPQDITAVQNIVKSGQSTWFTFQGPRVDWTGADDIKNGWINSYGQAWWDANPANSSSFPNRPHLMSYKTSQASIKNFRSRKPIAWNVKLQGDDITVSHAIVDATSTGGFPFNTDGFDVEGTNISITDSVMFNGDDAIAVNTPSHNIVFARNTIGYQSHGMSIGSLGKDPTDFANITNLRFEDVTVIDALYAARFKSWSGGRGLVKNVVWKNIRTFNVTFPIFVTQSYSDQSASRPGTIDPFSSVMMEDFTWSDFSGTINTYHPGDGSCVTDPCWYNVGLPNLKHTEAIVLECNTESSCKNFRTEGIRLHPQSKDSPSVICMKATAELNPKLGFECKNGTFVPH.

Residues 1-21 (MLITNPALLGILASLVPLALG) form the signal peptide. N84 and N151 each carry an N-linked (GlcNAc...) asparagine glycan. PbH1 repeat units lie at residues 188-210 (GDDI…PFNT), 217-238 (GTNI…AVNT), and 240-261 (SHNI…SIGS). An N-linked (GlcNAc...) asparagine glycan is attached at N219. D231 serves as the catalytic Proton donor. H255 is an active-site residue. An N-linked (GlcNAc...) asparagine glycan is attached at N271. One copy of the PbH1 4 repeat lies at 272–293 (ITNLRFEDVTVIDALYAARFKS). N313 carries N-linked (GlcNAc...) asparagine glycosylation. C389 and C395 are disulfide-bonded. The N-linked (GlcNAc...) asparagine glycan is linked to N434.

Belongs to the glycosyl hydrolase 28 family.

It localises to the secreted. It carries out the reaction [(1-&gt;4)-alpha-D-galacturonosyl](n) + H2O = alpha-D-galacturonate + [(1-&gt;4)-alpha-D-galacturonosyl](n-1). Its function is as follows. Specific in hydrolyzing the terminal glycosidic bond of polygalacturonic acid and oligogalacturonates. This Aspergillus fumigatus (strain CBS 144.89 / FGSC A1163 / CEA10) (Neosartorya fumigata) protein is Probable exopolygalacturonase C (pgxC).